The sequence spans 600 residues: Calcium/calmodulin-dependent serine/threonine-protein kinase 1 (600 aa).

The segment at 1–99 is disordered; that stretch reads MGLCHGKSAA…GGFKRPFPPP (99 aa). The span at 24–56 shows a compositional bias: low complexity; the sequence is TRVAEAAAAPAKPASPAPSAAAAAAAPAKPGTP. Over residues 74 to 85 the composition is skewed to polar residues; that stretch reads YKGSPANSSVAS. Residues 147 to 409 enclose the Protein kinase domain; sequence YELGREVGRG…AAQALCHPWI (263 aa). Residues 153–161 and Lys179 contribute to the ATP site; that span reads VGRGHFGYT. Asp275 serves as the catalytic Proton acceptor.

Belongs to the protein kinase superfamily. Ser/Thr protein kinase family. Autophosphorylated. In terms of tissue distribution, highly expressed in roots in the zone of cell division. Expressed in leaf mesophyll cells and at lower levels in mature stems.

It catalyses the reaction L-seryl-[protein] + ATP = O-phospho-L-seryl-[protein] + ADP + H(+). The catalysed reaction is L-threonyl-[protein] + ATP = O-phospho-L-threonyl-[protein] + ADP + H(+). Its activity is regulated as follows. Activated by the binding of calmodulin-like protein 1 (CML1) in the presence of Ca(2+). In terms of biological role, possesses kinase activity in vitro. The polypeptide is Calcium/calmodulin-dependent serine/threonine-protein kinase 1 (CAMK1) (Oryza sativa subsp. japonica (Rice)).